We begin with the raw amino-acid sequence, 182 residues long: uncharacterized protein (182 aa).

It to M.tuberculosis Rv2313c.

This is an uncharacterized protein from Escherichia coli (strain K12).